We begin with the raw amino-acid sequence, 523 residues long: Probable malate:quinone oxidoreductase 1 (523 aa).

The protein belongs to the MQO family. The cofactor is FAD.

It carries out the reaction (S)-malate + a quinone = a quinol + oxaloacetate. It participates in carbohydrate metabolism; tricarboxylic acid cycle; oxaloacetate from (S)-malate (quinone route): step 1/1. The sequence is that of Probable malate:quinone oxidoreductase 1 from Pseudomonas aeruginosa (strain ATCC 15692 / DSM 22644 / CIP 104116 / JCM 14847 / LMG 12228 / 1C / PRS 101 / PAO1).